We begin with the raw amino-acid sequence, 458 residues long: uncharacterized protein (458 aa).

Residues 1–10 show a composition bias toward basic and acidic residues; sequence MQAEPKKSQA. A disordered region spans residues 1–20; the sequence is MQAEPKKSQAEQRAVAEPVS. One can recognise a TRAM domain in the interval 23-84; the sequence is VSLVGEEYEV…ARFLRADAVE (62 aa). C97, C105, C108, and C193 together coordinate [4Fe-4S] cluster. S-adenosyl-L-methionine is bound by residues Q287, Y316, E340, and D384. C411 (nucleophile) is an active-site residue.

Belongs to the class I-like SAM-binding methyltransferase superfamily. RNA M5U methyltransferase family.

This is an uncharacterized protein from Streptomyces coelicolor (strain ATCC BAA-471 / A3(2) / M145).